A 533-amino-acid polypeptide reads, in one-letter code: Berberine bridge enzyme-like 28 (533 aa).

Positions 1–23 (MEFSSFLFTILLFSLNISPLVSA) are cleaved as a signal peptide. Cysteines 34 and 96 form a disulfide. One can recognise an FAD-binding PCMH-type domain in the interval 74–249 (ETPKPVSIIT…LSWKVKLVDV (176 aa)). Residue His-111 is modified to Pros-8alpha-FAD histidine. Asn-142 and Asn-440 each carry an N-linked (GlcNAc...) asparagine glycan.

This sequence belongs to the oxygen-dependent FAD-linked oxidoreductase family. It depends on FAD as a cofactor.

It is found in the secreted. Its subcellular location is the cell wall. Its function is as follows. Involved in adaptation to salt stress. The protein is Berberine bridge enzyme-like 28 of Arabidopsis thaliana (Mouse-ear cress).